The sequence spans 788 residues: Endonuclease MutS2 (788 aa).

Residue 332 to 339 (GPNTGGKT) coordinates ATP. The Smr domain maps to 713–788 (VDLRGMDAEE…GTGVTVVELK (76 aa)).

This sequence belongs to the DNA mismatch repair MutS family. MutS2 subfamily. As to quaternary structure, homodimer. Binds to stalled ribosomes, contacting rRNA.

In terms of biological role, endonuclease that is involved in the suppression of homologous recombination and thus may have a key role in the control of bacterial genetic diversity. Functionally, acts as a ribosome collision sensor, splitting the ribosome into its 2 subunits. Detects stalled/collided 70S ribosomes which it binds and splits by an ATP-hydrolysis driven conformational change. Acts upstream of the ribosome quality control system (RQC), a ribosome-associated complex that mediates the extraction of incompletely synthesized nascent chains from stalled ribosomes and their subsequent degradation. Probably generates substrates for RQC. The sequence is that of Endonuclease MutS2 from Clostridium botulinum (strain Okra / Type B1).